The primary structure comprises 601 residues: Probable sphingosine-1-phosphate lyase (601 aa).

K360 carries the N6-(pyridoxal phosphate)lysine modification.

It belongs to the group II decarboxylase family. Sphingosine-1-phosphate lyase subfamily. Requires pyridoxal 5'-phosphate as cofactor.

The catalysed reaction is sphinganine 1-phosphate = hexadecanal + phosphoethanolamine. Cleaves phosphorylated sphingoid bases (PSBs), such as sphingosine-1-phosphate, into fatty aldehydes and phosphoethanolamine. Possibly implicated in influencing the macrophage autophagy pathway. This is Probable sphingosine-1-phosphate lyase from Legionella pneumophila subsp. pneumophila (strain Philadelphia 1 / ATCC 33152 / DSM 7513).